The sequence spans 108 residues: DNA-binding protein HBbu (108 aa).

Belongs to the bacterial histone-like protein family.

Its function is as follows. Histone-like DNA-binding protein which is capable of wrapping DNA to stabilize it, and thus to prevent its denaturation under extreme environmental conditions. The polypeptide is DNA-binding protein HBbu (hbb) (Borreliella afzelii (Borrelia afzelii)).